The sequence spans 137 residues: uncharacterized protein (137 aa).

A helical membrane pass occupies residues 116-136 (YLSIANLATLLLFGIIGLSII).

The protein localises to the host membrane. This is an uncharacterized protein from His1 virus (isolate Australia/Victoria) (His1V).